The chain runs to 466 residues: UDP-N-acetylmuramate--L-alanine ligase (466 aa).

114-120 (GTHGKTT) lines the ATP pocket.

Belongs to the MurCDEF family.

The protein resides in the cytoplasm. The enzyme catalyses UDP-N-acetyl-alpha-D-muramate + L-alanine + ATP = UDP-N-acetyl-alpha-D-muramoyl-L-alanine + ADP + phosphate + H(+). Its pathway is cell wall biogenesis; peptidoglycan biosynthesis. Functionally, cell wall formation. This is UDP-N-acetylmuramate--L-alanine ligase from Mesorhizobium japonicum (strain LMG 29417 / CECT 9101 / MAFF 303099) (Mesorhizobium loti (strain MAFF 303099)).